The primary structure comprises 308 residues: Probable manganese-dependent inorganic pyrophosphatase (308 aa).

The Mn(2+) site is built by histidine 9, aspartate 13, aspartate 15, aspartate 75, histidine 97, and aspartate 149.

This sequence belongs to the PPase class C family. Requires Mn(2+) as cofactor.

Its subcellular location is the cytoplasm. The enzyme catalyses diphosphate + H2O = 2 phosphate + H(+). This chain is Probable manganese-dependent inorganic pyrophosphatase, found in Listeria monocytogenes serotype 4b (strain CLIP80459).